Consider the following 370-residue polypeptide: Actin-related protein 2/3 complex subunit 1A-B (370 aa).

WD repeat units follow at residues 6-45, 50-89, 140-179, 202-241, 244-284, and 322-365; these read FLLE…WVKC, EHNG…WKPT, PIRS…VDEK, SSGG…SVSQ, TEFL…TFVS, and LHQN…SYIQ.

The protein belongs to the WD repeat ARPC1 family. Component of the Arp2/3 complex.

The protein localises to the cytoplasm. The protein resides in the cytoskeleton. Its subcellular location is the nucleus. Probably functions as a component of the Arp2/3 complex which is involved in regulation of actin polymerization and together with an activating nucleation-promoting factor (NPF) mediates the formation of branched actin networks. In addition to its role in the cytoplasmic cytoskeleton, the Arp2/3 complex also promotes actin polymerization in the nucleus, thereby regulating gene transcription and repair of damaged DNA. The polypeptide is Actin-related protein 2/3 complex subunit 1A-B (arpc1a-b) (Xenopus laevis (African clawed frog)).